We begin with the raw amino-acid sequence, 88 residues long: Protein transport protein Sec61 subunit beta (88 aa).

A disordered region spans residues 1-41 (MDSSVPGGQRTLQKRRNAQLQKEKKANQTPASPRQAGFGGS). Over 1–60 (MDSSVPGGQRTLQKRRNAQLQKEKKANQTPASPRQAGFGGSSSSILKLYTDEANGLRVDP) the chain is Cytoplasmic. A helical transmembrane segment spans residues 61 to 81 (LVVLFLAVAFVFSVVALHVVA).

This sequence belongs to the SEC61-beta family. As to quaternary structure, heterotrimeric complex composed of SEC61, SEB1 and SSS1.

It is found in the endoplasmic reticulum membrane. In terms of biological role, necessary for protein translocation in the endoplasmic reticulum. This is Protein transport protein Sec61 subunit beta (SBH1) from Kluyveromyces lactis (strain ATCC 8585 / CBS 2359 / DSM 70799 / NBRC 1267 / NRRL Y-1140 / WM37) (Yeast).